Consider the following 52-residue polypeptide: Proteinase inhibitor (52 aa).

A Pyrrolidone carboxylic acid modification is found at Gln-1. Disulfide bonds link Cys-3–Cys-40, Cys-6–Cys-24, Cys-7–Cys-36, and Cys-13–Cys-49.

Belongs to the protease inhibitor I20 (potato type II proteinase inhibitor) family.

It is found in the secreted. The sequence is that of Proteinase inhibitor from Solanum melongena (Eggplant).